Consider the following 468-residue polypeptide: Cysteine--tRNA ligase (468 aa).

Cys-29 serves as a coordination point for Zn(2+). The 'HIGH' region motif lies at 31–41; sequence PTVYNYIHIGN. Zn(2+) is bound by residues Cys-209, His-234, and Glu-238. Positions 266–270 match the 'KMSKS' region motif; it reads KMSKS. Lys-269 provides a ligand contact to ATP. At Ser-270 the chain carries Phosphoserine.

It belongs to the class-I aminoacyl-tRNA synthetase family. In terms of assembly, monomer. Zn(2+) is required as a cofactor.

It is found in the cytoplasm. The enzyme catalyses tRNA(Cys) + L-cysteine + ATP = L-cysteinyl-tRNA(Cys) + AMP + diphosphate. In Oceanobacillus iheyensis (strain DSM 14371 / CIP 107618 / JCM 11309 / KCTC 3954 / HTE831), this protein is Cysteine--tRNA ligase.